The sequence spans 33 residues: Glutaminase-asparaginase (33 aa).

The 33-residue stretch at Asn-1–Lys-33 folds into the Asparaginase/glutaminase domain. Thr-10 functions as the Acyl-ester intermediate in the catalytic mechanism.

The protein belongs to the asparaginase 1 family. As to quaternary structure, homotetramer.

The protein resides in the periplasm. The enzyme catalyses L-glutamine + H2O = L-glutamate + NH4(+). It catalyses the reaction L-asparagine + H2O = L-aspartate + NH4(+). The protein is Glutaminase-asparaginase (ansB) of Delftia acidovorans (Pseudomonas acidovorans).